The following is a 1203-amino-acid chain: Cation-transporting ATPase catp-5 (1203 aa).

The Cytoplasmic portion of the chain corresponds to 1–68 (MNTSEREPLL…YAYKETIGRQ (68 aa)). Residues 21–42 (TTDNPSTKIMKREKDNPKAKTT) are disordered. Residues 69 to 89 (ILFWLLTIVTLGFYQLLAYWV) form a helical membrane-spanning segment. The Extracellular portion of the chain corresponds to 90–209 (KSLFVKVRFQ…RKIYNMNALA (120 aa)). A helical membrane pass occupies residues 210–230 (LALTPILVILFKEVLGPFYLF). Topologically, residues 231–242 (QCFSVALWYSDN) are cytoplasmic. The helical transmembrane segment at 243–263 (YAYYASVIVIITVGSAAVAVY) threads the bilayer. At 264-297 (QMRAQEKRIRNMVGDTISVIVRRDGHDITIDASE) the chain is on the extracellular side. Residues 298 to 318 (IVPMDILILPSNTFILPCDCL) form a helical membrane-spanning segment. Over 319–414 (LMNGTVIVNE…KPQEKEALKD (96 aa)) the chain is Cytoplasmic. Residues 415 to 435 (VMVFILVLGFIALIGFIYTVI) traverse the membrane as a helical segment. Residues 436 to 451 (EMVSRGESLKHIIIRS) lie on the Extracellular side of the membrane. Residues 452–472 (LDIITIVVPPALPAAMSVGII) traverse the membrane as a helical segment. The Cytoplasmic portion of the chain corresponds to 473–935 (NANSRLKKKK…KEGRCALVTS (463 aa)). Asp503 serves as the catalytic 4-aspartylphosphate intermediate. A disordered region spans residues 595–617 (ETQDFDTVQPTVLRPPPEQATYH). Mg(2+) contacts are provided by Asp883 and Asp887. A helical membrane pass occupies residues 936–956 (YAVSKYMAAYSLNEFLSVMLL). Residues 957–962 (YNDGTN) are Extracellular-facing. Residues 963-983 (ISDGQFLYIDLVLITLVALFL) form a helical membrane-spanning segment. The Cytoplasmic portion of the chain corresponds to 984–1007 (GNTEASRKLSGIPPPRRLATSAFY). The chain crosses the membrane as a helical span at residues 1008–1028 (FSVFGQMFFNIITQTTGYLLV). The Extracellular portion of the chain corresponds to 1029-1046 (RGQSWYVPNPEELDNTTT). A helical membrane pass occupies residues 1047 to 1067 (MIGTTVFFTSCCMYLGYAFVY). At 1068-1085 (SKGHPYRRSVFTNWLLCG) the chain is on the cytoplasmic side. A helical membrane pass occupies residues 1086 to 1106 (IIFVIGAINMVMIFTNMGFLM). Residues 1107-1120 (NLMGFVYVPSTSMR) lie on the Extracellular side of the membrane. Residues 1121 to 1141 (FILLAISLAGVFLSLLYEHFF) form a helical membrane-spanning segment. At 1142–1203 (VEKVVAIHFE…DRKETIESKC (62 aa)) the chain is on the cytoplasmic side.

It belongs to the cation transport ATPase (P-type) (TC 3.A.3) family. Type V subfamily. Expressed in the 20 intestinal cells and in the excretory cell.

It is found in the apical cell membrane. It carries out the reaction ATP + H2O = ADP + phosphate + H(+). In terms of biological role, involved in the uptake and/or transport of polyamines, probably through ATP hydrolysis. This contributes to the maintenance of intracellular polyamine levels. Polyamines are essential for cell proliferation and are implicated in cellular processes, ranging from DNA replication to apoptosis. The chain is Cation-transporting ATPase catp-5 from Caenorhabditis elegans.